Reading from the N-terminus, the 539-residue chain is Membrane protein insertase YidC (539 aa).

The helical transmembrane segment at 6–26 threads the bilayer; that stretch reads VILAVALSFAVLLGWQFLFPP. The interval 28–63 is disordered; the sequence is PQQPAPAQQEQTAQPNQAVDSSVAGPVSNQLPDPAS. The span at 32–45 shows a compositional bias: low complexity; it reads APAQQEQTAQPNQA. The span at 54-63 shows a compositional bias: polar residues; the sequence is VSNQLPDPAS. The next 3 membrane-spanning stretches (helical) occupy residues 349 to 369, 421 to 441, and 496 to 516; these read YGIAIILLTIVIKILFWPLSH, MLLQIPVFFGLYKALMGTVAL, and IMMFLPLVFTFMFLNFPSGLV.

This sequence belongs to the OXA1/ALB3/YidC family. Type 1 subfamily. As to quaternary structure, interacts with the Sec translocase complex via SecD. Specifically interacts with transmembrane segments of nascent integral membrane proteins during membrane integration.

It is found in the cell inner membrane. In terms of biological role, required for the insertion and/or proper folding and/or complex formation of integral membrane proteins into the membrane. Involved in integration of membrane proteins that insert both dependently and independently of the Sec translocase complex, as well as at least some lipoproteins. Aids folding of multispanning membrane proteins. This chain is Membrane protein insertase YidC, found in Maridesulfovibrio salexigens (strain ATCC 14822 / DSM 2638 / NCIMB 8403 / VKM B-1763) (Desulfovibrio salexigens).